The sequence spans 2388 residues: CCR4-NOT transcription complex subunit 1 (2388 aa).

Short sequence motifs (LXXLL) lie at residues Leu-153–Leu-157, Leu-181–Leu-185, Leu-223–Leu-227, and Leu-570–Leu-574. 2 disordered regions span residues Ser-1012–Ala-1035 and Glu-1300–Ser-1320. Positions Thr-1016–Ala-1035 are enriched in low complexity. Positions Glu-1076–Thr-1617 are interaction with CCR4-NOT complex catalytic subunits. Positions Glu-1300 to Glu-1313 are enriched in basic and acidic residues. 3 consecutive short sequence motifs (LXXLL) follow at residues Leu-1651–Leu-1655, Leu-1954–Leu-1958, and Leu-2108–Leu-2112.

The protein belongs to the CNOT1 family. In terms of assembly, component of the CCR4-NOT complex.

It is found in the cytoplasm. The protein localises to the nucleus. Scaffolding component of the CCR4-NOT complex which is one of the major cellular mRNA deadenylases and is linked to various cellular processes including bulk mRNA degradation, miRNA-mediated repression, translational repression during translational initiation and general transcription regulation. Additional complex functions may be a consequence of its influence on mRNA expression. Its scaffolding function implies its interaction with the catalytic complex module and diverse RNA-binding proteins mediating the complex recruitment to selected mRNA 3'UTRs. Acts as a transcriptional repressor. Represses the ligand-dependent transcriptional activation by nuclear receptors. This chain is CCR4-NOT transcription complex subunit 1 (cnot1), found in Xenopus tropicalis (Western clawed frog).